The primary structure comprises 515 residues: 2,3-bisphosphoglycerate-independent phosphoglycerate mutase (515 aa).

Positions 17 and 67 each coordinate Mn(2+). S67 acts as the Phosphoserine intermediate in catalysis. Substrate is bound by residues H128, 157 to 158 (RD), R190, R196, 262 to 265 (RADR), and K336. Residues D403, H407, D444, H445, and H463 each contribute to the Mn(2+) site.

Belongs to the BPG-independent phosphoglycerate mutase family. In terms of assembly, monomer. Mn(2+) is required as a cofactor.

The enzyme catalyses (2R)-2-phosphoglycerate = (2R)-3-phosphoglycerate. It participates in carbohydrate degradation; glycolysis; pyruvate from D-glyceraldehyde 3-phosphate: step 3/5. Its function is as follows. Catalyzes the interconversion of 2-phosphoglycerate and 3-phosphoglycerate. This chain is 2,3-bisphosphoglycerate-independent phosphoglycerate mutase, found in Acinetobacter baylyi (strain ATCC 33305 / BD413 / ADP1).